A 409-amino-acid polypeptide reads, in one-letter code: Argininosuccinate synthase (409 aa).

Residue 9 to 17 (AYSGGLDTS) participates in ATP binding. Residue Tyr86 participates in L-citrulline binding. Position 116 (Gly116) interacts with ATP. The L-aspartate site is built by Thr118, Asn122, and Asp123. Asn122 lines the L-citrulline pocket. The L-citrulline site is built by Arg126, Ser174, Ser183, Glu259, and Tyr271.

Belongs to the argininosuccinate synthase family. Type 1 subfamily. Homotetramer.

Its subcellular location is the cytoplasm. The catalysed reaction is L-citrulline + L-aspartate + ATP = 2-(N(omega)-L-arginino)succinate + AMP + diphosphate + H(+). It functions in the pathway amino-acid biosynthesis; L-arginine biosynthesis; L-arginine from L-ornithine and carbamoyl phosphate: step 2/3. In Halalkalibacterium halodurans (strain ATCC BAA-125 / DSM 18197 / FERM 7344 / JCM 9153 / C-125) (Bacillus halodurans), this protein is Argininosuccinate synthase.